The following is a 518-amino-acid chain: Bifunctional purine biosynthesis protein PurH (518 aa).

An MGS-like domain is found at 1–146; the sequence is MSPIALLSVS…KNHQDVLVVT (146 aa).

The protein belongs to the PurH family.

The catalysed reaction is (6R)-10-formyltetrahydrofolate + 5-amino-1-(5-phospho-beta-D-ribosyl)imidazole-4-carboxamide = 5-formamido-1-(5-phospho-D-ribosyl)imidazole-4-carboxamide + (6S)-5,6,7,8-tetrahydrofolate. The enzyme catalyses IMP + H2O = 5-formamido-1-(5-phospho-D-ribosyl)imidazole-4-carboxamide. Its pathway is purine metabolism; IMP biosynthesis via de novo pathway; 5-formamido-1-(5-phospho-D-ribosyl)imidazole-4-carboxamide from 5-amino-1-(5-phospho-D-ribosyl)imidazole-4-carboxamide (10-formyl THF route): step 1/1. It functions in the pathway purine metabolism; IMP biosynthesis via de novo pathway; IMP from 5-formamido-1-(5-phospho-D-ribosyl)imidazole-4-carboxamide: step 1/1. The chain is Bifunctional purine biosynthesis protein PurH from Prochlorococcus marinus (strain NATL2A).